The sequence spans 433 residues: Serine--tRNA ligase (433 aa).

Residue 235–237 participates in L-serine binding; sequence TSE. ATP is bound at residue 266–268; sequence RSE. An L-serine-binding site is contributed by Glu289. 353-356 contacts ATP; it reads EISS. Ser388 serves as a coordination point for L-serine.

The protein belongs to the class-II aminoacyl-tRNA synthetase family. Type-1 seryl-tRNA synthetase subfamily. In terms of assembly, homodimer. The tRNA molecule binds across the dimer.

Its subcellular location is the cytoplasm. It catalyses the reaction tRNA(Ser) + L-serine + ATP = L-seryl-tRNA(Ser) + AMP + diphosphate + H(+). It carries out the reaction tRNA(Sec) + L-serine + ATP = L-seryl-tRNA(Sec) + AMP + diphosphate + H(+). The protein operates within aminoacyl-tRNA biosynthesis; selenocysteinyl-tRNA(Sec) biosynthesis; L-seryl-tRNA(Sec) from L-serine and tRNA(Sec): step 1/1. Functionally, catalyzes the attachment of serine to tRNA(Ser). Is also able to aminoacylate tRNA(Sec) with serine, to form the misacylated tRNA L-seryl-tRNA(Sec), which will be further converted into selenocysteinyl-tRNA(Sec). The sequence is that of Serine--tRNA ligase from Burkholderia lata (strain ATCC 17760 / DSM 23089 / LMG 22485 / NCIMB 9086 / R18194 / 383).